Consider the following 205-residue polypeptide: Ribosomal RNA small subunit methyltransferase G (205 aa).

S-adenosyl-L-methionine is bound by residues G73, L78, 124–125 (VE), and R138.

It belongs to the methyltransferase superfamily. RNA methyltransferase RsmG family.

Its subcellular location is the cytoplasm. The enzyme catalyses guanosine(527) in 16S rRNA + S-adenosyl-L-methionine = N(7)-methylguanosine(527) in 16S rRNA + S-adenosyl-L-homocysteine. Its function is as follows. Specifically methylates the N7 position of guanine in position 527 of 16S rRNA. The chain is Ribosomal RNA small subunit methyltransferase G from Actinobacillus pleuropneumoniae serotype 7 (strain AP76).